Consider the following 70-residue polypeptide: MIFYKQRNAHLKPNETINYKDIDLLRKFITDQSKIVSRRSNGLTVKQQKQLAKSIKKARILALLPFVNKD.

Belongs to the bacterial ribosomal protein bS18 family. In terms of assembly, part of the 30S ribosomal subunit.

The protein localises to the plastid. Its subcellular location is the chloroplast. This Gracilaria tenuistipitata var. liui (Red alga) protein is Small ribosomal subunit protein bS18c.